A 255-amino-acid chain; its full sequence is 14-3-3-like protein GF14 psi (255 aa).

Ser-66 is modified (phosphoserine). A Phosphothreonine modification is found at Thr-162. Ser-189 carries the post-translational modification Phosphoserine. Phosphothreonine is present on residues Thr-210 and Thr-238.

The protein belongs to the 14-3-3 family. In terms of assembly, component of a DNA binding complex that binds to the G box. Interacts with IDH3, AGT3, GLN1-1, GLN1-2, GLN1-4, SAM1, SAM2, MDH1, METK3 and MDH2. Binds to 1-aminocyclopropane-1-carboxylate synthases (ACS) such as ACS2, ACS5, ACS6, ACS8, and ACS11. Interacts with FD. Interacts with DREB1A and DREB1B in the nucleus. Interacts with CINV1.

The protein resides in the cytoplasm. It is found in the nucleus. In terms of biological role, is associated with a DNA binding complex that binds to the G box, a well-characterized cis-acting DNA regulatory element found in plant genes. Involved in the regulation of nutrient metabolism. Reciprocal negative transcription regulation of miR396. Negative regulator of constitutive freezing tolerance and cold acclimation by controlling cold-induced gene expression partially through an ethylene (ET)-dependent pathway; prevents ethylene (ET) biosynthesis, probably by binding 1-aminocyclopropane-1-carboxylate synthases (ACS) to reduce their stability, thus contributing to establish adequate ET levels under both standard and low-temperature conditions. The polypeptide is 14-3-3-like protein GF14 psi (Arabidopsis thaliana (Mouse-ear cress)).